The sequence spans 141 residues: Putative inactive deoxyuridine 5'-triphosphate nucleotidohydrolase-like protein FLJ16323 (141 aa).

Belongs to the dUTPase family.

The chain is Putative inactive deoxyuridine 5'-triphosphate nucleotidohydrolase-like protein FLJ16323 from Homo sapiens (Human).